A 500-amino-acid chain; its full sequence is NAD(P)H-quinone oxidoreductase chain 4, chloroplastic (500 aa).

A run of 14 helical transmembrane segments spans residues 4–24, 35–55, 87–107, 113–130, 134–154, 167–187, 211–231, 242–262, 272–292, 305–325, 330–350, 386–406, 416–436, and 462–482; these read FPWL…MLFL, YTIC…CYNF, IGTI…AFPV, FFHF…GSFS, LLLF…LLSM, FILY…GISL, ILFY…IPLH, HYST…YGLV, AHSM…IYAA, IAYS…SITD, GAIL…FLAG, LALP…GIIT, ILII…LLSM, and LFLS…PDFV.

The protein belongs to the complex I subunit 4 family.

It is found in the plastid. It localises to the chloroplast thylakoid membrane. The enzyme catalyses a plastoquinone + NADH + (n+1) H(+)(in) = a plastoquinol + NAD(+) + n H(+)(out). It catalyses the reaction a plastoquinone + NADPH + (n+1) H(+)(in) = a plastoquinol + NADP(+) + n H(+)(out). The protein is NAD(P)H-quinone oxidoreductase chain 4, chloroplastic of Arabis hirsuta (Hairy rock-cress).